The chain runs to 116 residues: Iron-sulfur cluster assembly protein CyaY (116 aa).

This sequence belongs to the frataxin family.

Functionally, involved in iron-sulfur (Fe-S) cluster assembly. May act as a regulator of Fe-S biogenesis. This Polaromonas sp. (strain JS666 / ATCC BAA-500) protein is Iron-sulfur cluster assembly protein CyaY.